Reading from the N-terminus, the 349-residue chain is Draxin (349 aa).

The signal sequence occupies residues 1–25; it reads MAASSTFFSPSLFLCVLVLIDITLA. Over residues 40–53 the composition is skewed to polar residues; the sequence is NHLQNQETWPQQPR. 3 disordered regions span residues 40-63, 119-166, and 246-273; these read NHLQ…HGLA, PHAE…LYKK, and WPSA…EGEP. The segment covering 54-63 has biased composition (basic residues); the sequence is SGHHHKHGLA. Over residues 119-139 the composition is skewed to basic and acidic residues; that stretch reads PHAERENQSPGSERGKKQNRE. Composition is skewed to basic residues over residues 140–155 and 249–258; these read QRRH…HRGK and AKKKEKRRSK. An N-linked (GlcNAc...) asparagine glycan is attached at asparagine 264.

The protein belongs to the draxin family.

It localises to the secreted. Functionally, chemorepulsive axon guidance protein required for the development of spinal cord and forebrain commissures. Acts as a chemorepulsive guidance protein for commissural axons during development. Able to inhibit or repel neurite outgrowth from dorsal spinal cord and cortical explants in vitro. Binds directly to the neurites and growth cones. The sequence is that of Draxin from Gallus gallus (Chicken).